The primary structure comprises 35 residues: Alpha-amanitin proprotein 1 (35 aa).

Positions 1-10 (MFDTNATRLP) are excised as a propeptide. The residue at position 11 (Ile-11) is a (3R,4R)-4,5-dihydroxyisoleucine; in form alpha-amanitin. Ile-11 is subject to (3R,4S)-4-hydroxyisoleucine; in form gamma-amanitin. A cross-link (cyclopeptide (Ile-Pro)) is located at residues 11–18 (IWGIGCNP). Positions 12–16 (WGIGC) form a cross-link, 2'-cysteinyl-6'-hydroxytryptophan sulfoxide (Trp-Cys). Position 18 is a 4-hydroxyproline (Pro-18). The propeptide occupies 19 to 35 (WTAEHVDQTLASGNDIC).

Belongs to the MSDIN fungal toxin family. Processed by the macrocyclase-peptidase enzyme POPB to yield a toxic bicyclic octapeptide. POPB first removes 10 residues from the N-terminus. Conformational trapping of the remaining peptide forces the enzyme to release this intermediate rather than proceed to macrocyclization. The enzyme rebinds the remaining peptide in a different conformation and catalyzes macrocyclization of the N-terminal 8 residues.

Major toxin belonging to the bicyclic octapeptides amatoxins that acts by binding non-competitively to RNA polymerase II and greatly slowing the elongation of transcripts from target promoters. In Galerina marginata (strain CBS 339.88), this protein is Alpha-amanitin proprotein 1.